Consider the following 490-residue polypeptide: GTPase Der (490 aa).

EngA-type G domains are found at residues 3 to 166 and 200 to 373; these read PVVA…AEAM and IKLA…DSAT. GTP is bound by residues 9–16, 56–60, 118–121, 206–213, 253–257, and 318–321; these read GRPNVGKS, DTGGI, NKVD, GKPNVGKS, DTAGV, and NKWD. The 85-residue stretch at 374 to 458 folds into the KH-like domain; the sequence is RRVSTSMLTR…PIQIRFQDGG (85 aa).

It belongs to the TRAFAC class TrmE-Era-EngA-EngB-Septin-like GTPase superfamily. EngA (Der) GTPase family. In terms of assembly, associates with the 50S ribosomal subunit.

Its function is as follows. GTPase that plays an essential role in the late steps of ribosome biogenesis. This Shewanella piezotolerans (strain WP3 / JCM 13877) protein is GTPase Der.